A 143-amino-acid chain; its full sequence is Mediator of RNA polymerase II transcription subunit 22 (143 aa).

This sequence belongs to the Mediator complex subunit 22 family. In terms of assembly, component of the Mediator complex, which includes at least CDK8, MED4, MED6, MED11, MED14, MED17, MED18, MED20, MED21, MED22, MED27, MED28, MED30 and MED31.

The protein localises to the nucleus. In terms of biological role, component of the Mediator complex, a coactivator involved in the regulated transcription of nearly all RNA polymerase II-dependent genes. Mediator functions as a bridge to convey information from gene-specific regulatory proteins to the basal RNA polymerase II transcription machinery. Mediator is recruited to promoters by direct interactions with regulatory proteins and serves as a scaffold for the assembly of a functional preinitiation complex with RNA polymerase II and the general transcription factors. This chain is Mediator of RNA polymerase II transcription subunit 22 (MED22), found in Drosophila melanogaster (Fruit fly).